The sequence spans 71 residues: UPF0346 protein SZO_05010 (71 aa).

The protein belongs to the UPF0346 family.

The chain is UPF0346 protein SZO_05010 from Streptococcus equi subsp. zooepidemicus (strain H70).